The following is a 296-amino-acid chain: MASLKALRNRIASVKSTQKITKAMKMVAAAKLRRAQAQAEAARPYATRMAAMMGALAEGAAENPNAPALLVGNGADRTHLIVVVSADRGLAGPFNASINRAARARARKLEAEGKQVRLFTVGRKGRDFFRRDMREKIIGEANFVGKKTIEFADAEAIANQIIAAFNDGKFDVCTLMFNRFVSVMSQVPSETPLIPASAGQAANDNAGSDQPAGDYEIEPDDGTLLDRLLPRNLAVQIYSALLESAAGEQGARMTAMDNATRNAGEMINRLTLNYNRTRQANITKELIEIISGAEAL.

The interval 194–216 is disordered; that stretch reads IPASAGQAANDNAGSDQPAGDYE.

It belongs to the ATPase gamma chain family. In terms of assembly, F-type ATPases have 2 components, CF(1) - the catalytic core - and CF(0) - the membrane proton channel. CF(1) has five subunits: alpha(3), beta(3), gamma(1), delta(1), epsilon(1). CF(0) has three main subunits: a, b and c.

The protein localises to the cell inner membrane. Its function is as follows. Produces ATP from ADP in the presence of a proton gradient across the membrane. The gamma chain is believed to be important in regulating ATPase activity and the flow of protons through the CF(0) complex. The chain is ATP synthase gamma chain from Acidiphilium cryptum (strain JF-5).